The chain runs to 501 residues: Phytoene desaturase (lycopene-forming) (501 aa).

Position 12–45 (12–45 (IVIGAGFGGLALAIRLQSAGIATTLVEARDKPGG)) interacts with FAD.

This sequence belongs to the carotenoid/retinoid oxidoreductase family. FAD serves as cofactor.

The catalysed reaction is 15-cis-phytoene + 4 A = all-trans-lycopene + 4 AH2. The protein operates within carotenoid biosynthesis; astaxanthin biosynthesis. This enzyme converts phytoene into lycopene via the intermediaries of phytofluene, zeta-carotene and neurosporene by the introduction of four double bonds. This chain is Phytoene desaturase (lycopene-forming) (crtI), found in Paracoccus sp. (strain N81106 / MBIC 01143) (Agrobacterium aurantiacum).